Reading from the N-terminus, the 339-residue chain is MKIAVDAMGGDLAPREIVRGAVAAAGEGSAEIILVGDQRRLEEELALLHPSGRIEIYHTDQVITMDEQPALGLRRKREASIVVATRLVKEGRAEAVVSAGSTGTQMAAALLILGRSGKIQRPAIATLIPTLKGPKLLLDVGANVDCRPEHLYEFALMGNLYAARVMGIPNPRVGLLNIGTEACKGNEQTLGAYNLLRGAPLNFIGNVEAREILFGETDVIVCDGFVGNAILKFGEGLGQALFTMISREVNKSLRSRMGAALLLPALRGLKKQVDYTEYGGAPLLGVQGISIICHGSSNARAIKNAIKVAVRCVNQGLVTALGDLPGASEERMVKGCQSN.

Belongs to the PlsX family. Homodimer. Probably interacts with PlsY.

The protein localises to the cytoplasm. The catalysed reaction is a fatty acyl-[ACP] + phosphate = an acyl phosphate + holo-[ACP]. It functions in the pathway lipid metabolism; phospholipid metabolism. In terms of biological role, catalyzes the reversible formation of acyl-phosphate (acyl-PO(4)) from acyl-[acyl-carrier-protein] (acyl-ACP). This enzyme utilizes acyl-ACP as fatty acyl donor, but not acyl-CoA. The protein is Phosphate acyltransferase of Moorella thermoacetica (strain ATCC 39073 / JCM 9320).